The chain runs to 848 residues: Neprilysin-11 (848 aa).

Over 1-74 (MPFGNDPPDY…WWKSRTTMEK (74 aa)) the chain is Cytoplasmic. A helical; Signal-anchor for type II membrane protein transmembrane segment spans residues 75-95 (LLLPVLLLFCLLTAVLLAVII). Residues 96-848 (NTDKRIEAMK…VNPDHKCIVW (753 aa)) lie on the Extracellular side of the membrane. The disordered stretch occupies residues 108–161 (HATQTEHAGFGDPTENPTKTAEDPRVPPIVPEAPTSPEPEVTTSTEKPKEPEVC). Positions 133–144 (VPPIVPEAPTSP) are enriched in pro residues. Residues 160–848 (VCSTPGCVRA…VNPDHKCIVW (689 aa)) enclose the Peptidase M13 domain. The cysteines at positions 161 and 166 are disulfide-linked. 8 N-linked (GlcNAc...) asparagine glycosylation sites follow: Asn-178, Asn-249, Asn-284, Asn-312, Asn-337, Asn-364, Asn-398, and Asn-438. 4 disulfide bridges follow: Cys-184/Cys-833, Cys-192/Cys-793, Cys-247/Cys-509, and Cys-719/Cys-845. Position 682 (His-682) interacts with Zn(2+). Glu-683 is an active-site residue. His-686 contacts Zn(2+). Asn-726 carries an N-linked (GlcNAc...) asparagine glycan. Residue Glu-744 participates in Zn(2+) binding. Asp-748 acts as the Proton donor in catalysis.

The protein belongs to the peptidase M13 family. The cofactor is Zn(2+).

Its subcellular location is the cell membrane. Its function is as follows. Probable cell surface protease. The sequence is that of Neprilysin-11 (nep-11) from Caenorhabditis elegans.